Consider the following 128-residue polypeptide: MKEVIAIIRPNTVSKTVKALDVVGFPAVTMAECFGRGKQKGYFSANLPEIVDIQKIIEEGEKEGRFIKYIPKRLISIVVDDADVPLVVGIISKVNRTGSFGDGRIFVLPVEEAIRVRTGETGEIAIGN.

The protein belongs to the P(II) protein family.

In terms of biological role, could be involved in the regulation of nitrogen fixation. In Methanothermococcus thermolithotrophicus (Methanococcus thermolithotrophicus), this protein is Nitrogen fixation nifHD region GlnB-like protein 2 (glnBB).